The chain runs to 543 residues: CTP synthase (543 aa).

The segment at 1-266 is amidoligase domain; sequence MKTNYIFVTG…DDYICERFSL (266 aa). CTP is bound at residue S14. Residue S14 coordinates UTP. ATP-binding positions include 15 to 20 and D72; that span reads SLGKGI. 2 residues coordinate Mg(2+): D72 and E140. Residues 147–149, 187–192, and K223 contribute to the CTP site; these read DIE and KTKPTQ. UTP is bound by residues 187–192 and K223; that span reads KTKPTQ. 239-241 contacts ATP; it reads KDV. Positions 291–538 constitute a Glutamine amidotransferase type-1 domain; that stretch reads TVGIVGKYID…IKAASEYQKK (248 aa). An L-glutamine-binding site is contributed by G352. C379 (nucleophile; for glutamine hydrolysis) is an active-site residue. Residues 380–383, E403, and R466 each bind L-glutamine; that span reads LGMQ. Active-site residues include H511 and E513.

The protein belongs to the CTP synthase family. Homotetramer.

It catalyses the reaction UTP + L-glutamine + ATP + H2O = CTP + L-glutamate + ADP + phosphate + 2 H(+). It carries out the reaction L-glutamine + H2O = L-glutamate + NH4(+). The enzyme catalyses UTP + NH4(+) + ATP = CTP + ADP + phosphate + 2 H(+). Its pathway is pyrimidine metabolism; CTP biosynthesis via de novo pathway; CTP from UDP: step 2/2. With respect to regulation, allosterically activated by GTP, when glutamine is the substrate; GTP has no effect on the reaction when ammonia is the substrate. The allosteric effector GTP functions by stabilizing the protein conformation that binds the tetrahedral intermediate(s) formed during glutamine hydrolysis. Inhibited by the product CTP, via allosteric rather than competitive inhibition. Catalyzes the ATP-dependent amination of UTP to CTP with either L-glutamine or ammonia as the source of nitrogen. Regulates intracellular CTP levels through interactions with the four ribonucleotide triphosphates. The protein is CTP synthase of Baumannia cicadellinicola subsp. Homalodisca coagulata.